A 91-amino-acid chain; its full sequence is Small ribosomal subunit protein bS6 (91 aa).

It belongs to the bacterial ribosomal protein bS6 family.

Functionally, binds together with bS18 to 16S ribosomal RNA. The chain is Small ribosomal subunit protein bS6 from Leptospira interrogans serogroup Icterohaemorrhagiae serovar copenhageni (strain Fiocruz L1-130).